We begin with the raw amino-acid sequence, 543 residues long: Cytochrome P450 307a1 (543 aa).

A Phosphoserine modification is found at S219. Residues F440 to E460 form a disordered region. Residues P449–E460 show a composition bias toward polar residues. C485 is a heme binding site.

The protein belongs to the cytochrome P450 family. The cofactor is heme.

The protein localises to the endoplasmic reticulum membrane. It localises to the microsome membrane. In terms of biological role, required for correct development of the embryonic midline glial cells which are necessary for the formation of distinct segmental commissures. The sequence is that of Cytochrome P450 307a1 (spo) from Drosophila melanogaster (Fruit fly).